A 295-amino-acid polypeptide reads, in one-letter code: Ribosomal RNA small subunit methyltransferase A (295 aa).

6 residues coordinate S-adenosyl-L-methionine: asparagine 29, leucine 31, glycine 56, glutamate 77, aspartate 102, and asparagine 128.

The protein belongs to the class I-like SAM-binding methyltransferase superfamily. rRNA adenine N(6)-methyltransferase family. RsmA subfamily.

Its subcellular location is the cytoplasm. It catalyses the reaction adenosine(1518)/adenosine(1519) in 16S rRNA + 4 S-adenosyl-L-methionine = N(6)-dimethyladenosine(1518)/N(6)-dimethyladenosine(1519) in 16S rRNA + 4 S-adenosyl-L-homocysteine + 4 H(+). In terms of biological role, specifically dimethylates two adjacent adenosines (A1518 and A1519) in the loop of a conserved hairpin near the 3'-end of 16S rRNA in the 30S particle. May play a critical role in biogenesis of 30S subunits. The sequence is that of Ribosomal RNA small subunit methyltransferase A from Listeria innocua serovar 6a (strain ATCC BAA-680 / CLIP 11262).